The following is a 283-amino-acid chain: Diaminopimelate epimerase (283 aa).

Substrate is bound by residues Asn13, Gln45, and Asn65. The active-site Proton donor is Cys74. Substrate is bound by residues 75–76, Asn156, Asn190, and 208–209; these read GN and ER. Catalysis depends on Cys217, which acts as the Proton acceptor. 218 to 219 contacts substrate; sequence GS.

It belongs to the diaminopimelate epimerase family. In terms of assembly, homodimer.

It localises to the cytoplasm. It catalyses the reaction (2S,6S)-2,6-diaminopimelate = meso-2,6-diaminopimelate. It functions in the pathway amino-acid biosynthesis; L-lysine biosynthesis via DAP pathway; DL-2,6-diaminopimelate from LL-2,6-diaminopimelate: step 1/1. Functionally, catalyzes the stereoinversion of LL-2,6-diaminopimelate (L,L-DAP) to meso-diaminopimelate (meso-DAP), a precursor of L-lysine and an essential component of the bacterial peptidoglycan. The sequence is that of Diaminopimelate epimerase from Bartonella henselae (strain ATCC 49882 / DSM 28221 / CCUG 30454 / Houston 1) (Rochalimaea henselae).